The chain runs to 314 residues: Ribonuclease Z (314 aa).

Zn(2+) contacts are provided by His63, His65, Asp67, His68, His142, Asp205, and His263. Asp67 serves as the catalytic Proton acceptor.

It belongs to the RNase Z family. In terms of assembly, homodimer. Zn(2+) is required as a cofactor.

The catalysed reaction is Endonucleolytic cleavage of RNA, removing extra 3' nucleotides from tRNA precursor, generating 3' termini of tRNAs. A 3'-hydroxy group is left at the tRNA terminus and a 5'-phosphoryl group is left at the trailer molecule.. Zinc phosphodiesterase, which displays some tRNA 3'-processing endonuclease activity. Probably involved in tRNA maturation, by removing a 3'-trailer from precursor tRNA. In Kineococcus radiotolerans (strain ATCC BAA-149 / DSM 14245 / SRS30216), this protein is Ribonuclease Z.